The following is a 418-amino-acid chain: MAGSVMVPSVSIGLALSVLIFFALSLKTLEARGTFGRLAGQPPQRTAAGGICASSVHIFGYKCEEHDVVTQDGYILNMQRIPEGRAGAVAGDGGKRQPVLIQHGILVDGMSWLLNPADQNLPLILADQGFDVWMGNTRGTRFSRRHKYLNPSQRAFWNWTWDELVSYDLPAMFDHIHGLTGQKIHYLGHSLGTLIGFASFSEKGLVDQVRSAAMLSPVAYLSHMTTVIGDIAAKTFLAEATSILGWPEFNPKSGLVGDFIKAICLKAGIDCYDLVSVITGKNCCLNASTIDLFLANEPQSTSTKNMIHLAQTVRDKELRKYNYGSSDRNIKHYGQAIPPAYNISAIPHELPLFFSYGGLDSLADVKDVEFLLDQFKYHDIDKMNVQFVKDYAHADFIMGVTAKDVVYNQVATFFKRQA.

Positions 1–31 (MAGSVMVPSVSIGLALSVLIFFALSLKTLEA) are cleaved as a signal peptide. Asparagine 158 carries N-linked (GlcNAc...) asparagine glycosylation. Serine 190 functions as the Nucleophile in the catalytic mechanism. N-linked (GlcNAc...) asparagine glycosylation is found at asparagine 286 and asparagine 342. Catalysis depends on charge relay system residues aspartate 360 and histidine 393.

The protein belongs to the AB hydrolase superfamily. Lipase family.

The protein resides in the secreted. It carries out the reaction a triacylglycerol + H2O = a diacylglycerol + a fatty acid + H(+). In terms of biological role, triacylglycerol (TAG) lipase. May be involved for TAG storage breakdown during seed germination. This is Triacylglycerol lipase 2 (LIP2) from Arabidopsis thaliana (Mouse-ear cress).